The following is a 192-amino-acid chain: Superoxide dismutase [Fe] (192 aa).

Fe cation contacts are provided by histidine 27, histidine 74, aspartate 157, and histidine 161.

Belongs to the iron/manganese superoxide dismutase family. As to quaternary structure, homodimer. The cofactor is Fe cation.

It carries out the reaction 2 superoxide + 2 H(+) = H2O2 + O2. Destroys superoxide anion radicals which are normally produced within the cells and which are toxic to biological systems. The sequence is that of Superoxide dismutase [Fe] (sodB) from Bordetella pertussis (strain Tohama I / ATCC BAA-589 / NCTC 13251).